A 543-amino-acid polypeptide reads, in one-letter code: Protein DETOXIFICATION 47, chloroplastic (543 aa).

Residues 1–30 constitute a chloroplast transit peptide; the sequence is MLIKSQRLTLFSPLLSKTRRIPVNSHQTLV. Residues 55–94 adopt a coiled-coil conformation; the sequence is VIRRRIKLERVTRNCVRIDREIDEEEEEEEKERGDLVKQS. The next 12 helical transmembrane spans lie at 107-127, 135-155, 181-201, 228-248, 256-276, 278-298, 319-339, 342-362, 406-426, 443-463, 472-492, and 497-517; these read GPAM…TVVI, LAAL…FMFL, VLLF…RLFG, GLAW…LGMK, ALAA…LFLG, GIAG…YMMM, LWKI…KIAF, FIIY…QVMA, IIGA…PGLF, LLIP…LEGT, FVSS…MFVT, and GLLG…GLYL.

The protein belongs to the multi antimicrobial extrusion (MATE) (TC 2.A.66.1) family. Preferentially expressed in the epidermal cells.

It localises to the plastid. The protein resides in the chloroplast membrane. Functionally, functions as a multidrug and toxin extrusion transporter in the export of salicylic acid (SA) from the chloroplast to the cytoplasm. Plays an essential function in plant defense via the pathogen-induced salicylic acid (SA) accumulation. Also acts as a key component of the Age-related resistance (ARR) pathway. The protein is Protein DETOXIFICATION 47, chloroplastic of Arabidopsis thaliana (Mouse-ear cress).